A 301-amino-acid chain; its full sequence is Large ribosomal subunit protein uL18 (301 aa).

Residues 257–271 (NPERVKSTKKNDKPK) are compositionally biased toward basic and acidic residues. A disordered region spans residues 257-283 (NPERVKSTKKNDKPKRDHKKFYPTKLT).

It belongs to the universal ribosomal protein uL18 family. In terms of assembly, component of the large ribosomal subunit (LSU).

The protein localises to the cytoplasm. It localises to the nucleus. Its function is as follows. Component of the ribosome, a large ribonucleoprotein complex responsible for the synthesis of proteins in the cell. The small ribosomal subunit (SSU) binds messenger RNAs (mRNAs) and translates the encoded message by selecting cognate aminoacyl-transfer RNA (tRNA) molecules. The large subunit (LSU) contains the ribosomal catalytic site termed the peptidyl transferase center (PTC), which catalyzes the formation of peptide bonds, thereby polymerizing the amino acids delivered by tRNAs into a polypeptide chain. The nascent polypeptides leave the ribosome through a tunnel in the LSU and interact with protein factors that function in enzymatic processing, targeting, and the membrane insertion of nascent chains at the exit of the ribosomal tunnel. The protein is Large ribosomal subunit protein uL18 (RPL5) of Tetrahymena thermophila (strain SB210).